The chain runs to 127 residues: Histone H2B type 1-A (127 aa).

The tract at residues 1-36 is disordered; sequence MPEVSSKGATISKKGFKKAVVKTQKKEGKKRKRTRK. Residue proline 2 is modified to N-acetylproline. Lysine 7, lysine 13, lysine 14, lysine 17, lysine 18, lysine 22, and lysine 25 each carry N6-acetyllysine; alternate. N6-crotonyllysine; alternate occurs at positions 7, 13, 14, 17, 18, 22, 25, and 36. N6-lactoyllysine; alternate is present on residues lysine 7 and lysine 13. Lysine 7 is covalently cross-linked (Glycyl lysine isopeptide (Lys-Gly) (interchain with G-Cter in SUMO2); alternate). An N6-lactoyllysine; alternate mark is found at lysine 17, lysine 18, lysine 22, and lysine 25. Lysine 22 participates in a covalent cross-link: Glycyl lysine isopeptide (Lys-Gly) (interchain with G-Cter in SUMO2); alternate. The residue at position 36 (lysine 36) is an N6-succinyllysine; alternate. Lysine 36 participates in a covalent cross-link: Glycyl lysine isopeptide (Lys-Gly) (interchain with G-Cter in ubiquitin); alternate. Serine 38 carries the phosphoserine modification. Position 45 is an N6-lactoyllysine; alternate (lysine 45). Lysine 48 carries the N6-methyllysine modification. Lysine 59 carries the N6,N6-dimethyllysine modification. The residue at position 81 (arginine 81) is a Dimethylated arginine. Position 86 is a phosphoserine (serine 86). At lysine 87 the chain carries N6-acetyllysine; alternate. At lysine 87 the chain carries N6-lactoyllysine; alternate. N6,N6,N6-trimethyllysine; alternate is present on lysine 87. An omega-N-methylarginine mark is found at arginine 88 and arginine 94. Residue lysine 110 is modified to N6-lactoyllysine; alternate. Lysine 110 bears the N6-methyllysine mark. Threonine 117 carries the post-translational modification Phosphothreonine. An N6-lactoyllysine; alternate mark is found at lysine 118 and lysine 122. N6-succinyllysine; alternate is present on residues lysine 118 and lysine 122. An N6-methylated lysine; alternate modification is found at lysine 118. Lysine 122 is covalently cross-linked (Glycyl lysine isopeptide (Lys-Gly) (interchain with G-Cter in ubiquitin); alternate).

This sequence belongs to the histone H2B family. The nucleosome is a histone octamer containing two molecules each of H2A, H2B, H3 and H4 assembled in one H3-H4 heterotetramer and two H2A-H2B heterodimers. Post-translationally, monoubiquitination at Lys-36 (H2BK34Ub) by the MSL1/MSL2 dimer is required for histone H3 'Lys-4' (H3K4me) and 'Lys-79' (H3K79me) methylation and transcription activation at specific gene loci, such as HOXA9 and MEIS1 loci. Similarly, monoubiquitination at Lys-122 (H2BK120Ub) by the RNF20/40 complex gives a specific tag for epigenetic transcriptional activation and is also prerequisite for histone H3 'Lys-4' and 'Lys-79' methylation. It also functions cooperatively with the FACT dimer to stimulate elongation by RNA polymerase II. H2BK120Ub also acts as a regulator of mRNA splicing: deubiquitination by USP49 is required for efficient cotranscriptional splicing of a large set of exons. Crotonylation (Kcr) is specifically present in male germ cells and marks testis-specific genes in post-meiotic cells, including X-linked genes that escape sex chromosome inactivation in haploid cells. Crotonylation marks active promoters and enhancers and confers resistance to transcriptional repressors. It is also associated with post-meiotically activated genes on autosomes. In terms of processing, acetylated during spermatogenesis. Acetylated form is most abundant in spermatogonia compared to spermatocytes and round spermatids. Post-translationally, phosphorylated at Thr-117 in spermatogonia, spermatocytes and round spermatids. Methylated at Lys-118 in spermatogonia, spermatocytes and round spermatids. In terms of processing, lactylated in macrophages by EP300/P300 by using lactoyl-CoA directly derived from endogenous or exogenous lactate, leading to stimulates gene transcription. As to expression, mainly expressed in testis, and the corresponding protein is also present in mature sperm (at protein level). Also found in some fat cells.

Its subcellular location is the nucleus. It localises to the chromosome. Functionally, variant histone specifically required to direct the transformation of dissociating nucleosomes to protamine in male germ cells. Entirely replaces classical histone H2B prior nucleosome to protamine transition and probably acts as a nucleosome dissociating factor that creates a more dynamic chromatin, facilitating the large-scale exchange of histones. Core component of nucleosome. Nucleosomes wrap and compact DNA into chromatin, limiting DNA accessibility to the cellular machineries which require DNA as a template. Histones thereby play a central role in transcription regulation, DNA repair, DNA replication and chromosomal stability. DNA accessibility is regulated via a complex set of post-translational modifications of histones, also called histone code, and nucleosome remodeling. Also found in fat cells, its function and the presence of post-translational modifications specific to such cells are still unclear. In Homo sapiens (Human), this protein is Histone H2B type 1-A.